Consider the following 265-residue polypeptide: Ubiquinone biosynthesis protein COQ4 homolog, mitochondrial (265 aa).

The transit peptide at 1-30 (MATLLRPVLRRLCGLPGLQRPAAEMPLRAR) directs the protein to the mitochondrion. S108 carries the phosphoserine modification. Positions 163, 164, 167, and 179 each coordinate Zn(2+).

It belongs to the COQ4 family. As to quaternary structure, component of a multi-subunit COQ enzyme complex, composed of at least COQ3, COQ4, COQ5, COQ6, COQ7 and COQ9. The cofactor is Zn(2+). As to expression, expressed ubiquitously, but at high levels in liver, lung and pancreas.

It localises to the mitochondrion inner membrane. It catalyses the reaction 4-hydroxy-3-methoxy-5-(all-trans-decaprenyl)benzoate + H(+) = 2-methoxy-6-(all-trans-decaprenyl)phenol + CO2. The protein operates within cofactor biosynthesis; ubiquinone biosynthesis. Functionally, lyase that catalyzes the C1-decarboxylation of 4-hydroxy-3-methoxy-5-(all-trans-decaprenyl)benzoic acid into 2-methoxy-6-(all-trans-decaprenyl)phenol during ubiquinone biosynthesis. The sequence is that of Ubiquinone biosynthesis protein COQ4 homolog, mitochondrial from Homo sapiens (Human).